Consider the following 1029-residue polypeptide: Beta-galactosidase 2 (1029 aa).

Positions 104 and 203 each coordinate substrate. Aspartate 203 is a Na(+) binding site. Residues glutamate 418, histidine 420, and glutamate 463 each coordinate Mg(2+). Substrate contacts are provided by residues glutamate 463 and 539–542 (EYAH). The Proton donor role is filled by glutamate 463. The Nucleophile role is filled by glutamate 539. Asparagine 599 lines the Mg(2+) pocket. Na(+)-binding residues include phenylalanine 603 and asparagine 606. Substrate contacts are provided by asparagine 606 and tryptophan 1004.

The protein belongs to the glycosyl hydrolase 2 family. Homotetramer. Requires Mg(2+) as cofactor. Na(+) is required as a cofactor.

The enzyme catalyses Hydrolysis of terminal non-reducing beta-D-galactose residues in beta-D-galactosides.. The sequence is that of Beta-galactosidase 2 from Enterobacter cloacae.